Here is a 579-residue protein sequence, read N- to C-terminus: Thiol:disulfide interchange protein DsbD (579 aa).

The first 16 residues, 1-16 (MKKLFLFFTLIFTAFA), serve as a signal peptide directing secretion. Disulfide bonds link C124–C129 and C193–C315. A run of 8 helical transmembrane segments spans residues 178 to 198 (IFGFFLLGLGLAFTPCVLPML), 230 to 250 (LTYTLLGLAVAAIGLPFQIAL), 254 to 274 (YVMIGLSILFVALALSMFGLF), 296 to 316 (GAFGGAFAMGMIAGLVASPCT), 337 to 357 (AATLYLLALGMGVPLMLITLF), 376 to 396 (FGFVMLALPVFLLSRILPEVW), 397 to 417 (EPRLWAGLATVFFIWFALQMS), and 420 to 440 (GFGYAIKIISFALAMVTVQPL). The Thioredoxin domain maps to 449 to 579 (TTTQSAVENM…AFSNWLKALH (131 aa)). C495 and C498 are oxidised to a cystine.

This sequence belongs to the thioredoxin family. DsbD subfamily.

The protein localises to the cell inner membrane. The catalysed reaction is [protein]-dithiol + NAD(+) = [protein]-disulfide + NADH + H(+). It catalyses the reaction [protein]-dithiol + NADP(+) = [protein]-disulfide + NADPH + H(+). Required to facilitate the formation of correct disulfide bonds in some periplasmic proteins and for the assembly of the periplasmic c-type cytochromes. Acts by transferring electrons from cytoplasmic thioredoxin to the periplasm. This transfer involves a cascade of disulfide bond formation and reduction steps. In Haemophilus influenzae (strain 86-028NP), this protein is Thiol:disulfide interchange protein DsbD.